A 406-amino-acid chain; its full sequence is MFMDFAMLPPEVNSTRMYSGPGAGSLWAAAAAWDQVSAELQSAAETYRSVIASLTGWQWLGPSSVRMGAAVTPYVEWLTTTAAQARQTATQITAAATGFEQAFAMTVPPPAIMANRAQVLSLIATNFFGQNTAAIAALETQYAEMWEQDATAMYDYAATSAAARTLTPFTSPQQDTNSAGLPAQSAEVSRATANAGAADGNWLGNLLEEIGILLLPIAPELTPFFLEAGEIVNAIPFPSIVGDEFCLLDGLLAWYATIGSINNINSMGTGIIGAEKNLGILPELGSAAAAAAPPPADIAPAFLAPLTSMAKSLSDGALRGPGEVSAAMRGAGTIGQMSVPPAWKAPAVTTVRAFDATPMTTLPGGDAPAAGVPGLPGMPASGAGRAGVVPRYGVRLTVMTRPLSGG.

It belongs to the mycobacterial PPE family.

This is an uncharacterized protein from Mycobacterium tuberculosis (strain CDC 1551 / Oshkosh).